The chain runs to 253 residues: Uroplakin-3b-like protein 1 (253 aa).

The first 26 residues, 1-26, serve as a signal peptide directing secretion; sequence MGLGRGQSPLLMALLLLLACLQMGMS. Over 27 to 194 the chain is Extracellular; the sequence is LERISYVPQL…PGPQTAGTVV (168 aa). Residues Asn-78 and Asn-130 are each glycosylated (N-linked (GlcNAc...) asparagine). The helical transmembrane segment at 195-215 threads the bilayer; sequence IIAILSVLLAVLLAALLALLI. Residues 216–253 are Cytoplasmic-facing; the sequence is FTWYDTCGSTPISGPGELVFVRKYDTHHMSRPSTVGGS.

It belongs to the uroplakin-3 family.

It is found in the membrane. The sequence is that of Uroplakin-3b-like protein 1 from Bos taurus (Bovine).